Here is a 157-residue protein sequence, read N- to C-terminus: Crossover junction endodeoxyribonuclease RuvC (157 aa).

Active-site residues include Asp7, Glu66, and Asp139. Mg(2+)-binding residues include Asp7, Glu66, and Asp139.

It belongs to the RuvC family. Homodimer which binds Holliday junction (HJ) DNA. The HJ becomes 2-fold symmetrical on binding to RuvC with unstacked arms; it has a different conformation from HJ DNA in complex with RuvA. In the full resolvosome a probable DNA-RuvA(4)-RuvB(12)-RuvC(2) complex forms which resolves the HJ. Mg(2+) serves as cofactor.

It is found in the cytoplasm. The enzyme catalyses Endonucleolytic cleavage at a junction such as a reciprocal single-stranded crossover between two homologous DNA duplexes (Holliday junction).. In terms of biological role, the RuvA-RuvB-RuvC complex processes Holliday junction (HJ) DNA during genetic recombination and DNA repair. Endonuclease that resolves HJ intermediates. Cleaves cruciform DNA by making single-stranded nicks across the HJ at symmetrical positions within the homologous arms, yielding a 5'-phosphate and a 3'-hydroxyl group; requires a central core of homology in the junction. The consensus cleavage sequence is 5'-(A/T)TT(C/G)-3'. Cleavage occurs on the 3'-side of the TT dinucleotide at the point of strand exchange. HJ branch migration catalyzed by RuvA-RuvB allows RuvC to scan DNA until it finds its consensus sequence, where it cleaves and resolves the cruciform DNA. Required for efficient infection in a mouse model system. The protein is Crossover junction endodeoxyribonuclease RuvC of Helicobacter pylori (strain G27).